The sequence spans 261 residues: Cytochrome c oxidase subunit 3 (261 aa).

Residues 1–15 lie on the Mitochondrial matrix side of the membrane; the sequence is MAHQAHAYHMVDPSP. A helical membrane pass occupies residues 16–34; sequence WPLTGAVAALLLTSGLAVW. Over 35 to 40 the chain is Mitochondrial intermembrane; that stretch reads FHFKSL. A helical transmembrane segment spans residues 41 to 66; it reads TLLAMGLLLMILTMIQWWRDIIREGT. Residues 67–72 lie on the Mitochondrial matrix side of the membrane; that stretch reads FQGHHT. A helical membrane pass occupies residues 73-105; it reads PPVQKGLRYGMILFITSEVFFFLGFFWAFYHSS. At 106-128 the chain is on the mitochondrial intermembrane side; it reads LAPTPELGGIWPPTGITPLDPFE. The chain crosses the membrane as a helical span at residues 129–152; the sequence is VPLLNTAVLLASGVTVTWTHHSLM. Over 153–155 the chain is Mitochondrial matrix; sequence EGK. A helical membrane pass occupies residues 156–183; that stretch reads RTEATQALTLTILLGLYFTALQAMEYYE. Residues 184–190 are Mitochondrial intermembrane-facing; sequence APFTIAD. A helical transmembrane segment spans residues 191–223; the sequence is GVYGTTFFVATGFHGLHVIIGSTFLAGCLLRQI. Residues 224–232 are Mitochondrial matrix-facing; that stretch reads LYHFTSSHH. A helical membrane pass occupies residues 233 to 256; sequence FGFEAAAWYWHFVDVVWLFLYVSI. Residues 257-261 lie on the Mitochondrial intermembrane side of the membrane; it reads YWWGS.

It belongs to the cytochrome c oxidase subunit 3 family. As to quaternary structure, component of the cytochrome c oxidase (complex IV, CIV), a multisubunit enzyme composed of 14 subunits. The complex is composed of a catalytic core of 3 subunits MT-CO1, MT-CO2 and MT-CO3, encoded in the mitochondrial DNA, and 11 supernumerary subunits COX4I, COX5A, COX5B, COX6A, COX6B, COX6C, COX7A, COX7B, COX7C, COX8 and NDUFA4, which are encoded in the nuclear genome. The complex exists as a monomer or a dimer and forms supercomplexes (SCs) in the inner mitochondrial membrane with NADH-ubiquinone oxidoreductase (complex I, CI) and ubiquinol-cytochrome c oxidoreductase (cytochrome b-c1 complex, complex III, CIII), resulting in different assemblies (supercomplex SCI(1)III(2)IV(1) and megacomplex MCI(2)III(2)IV(2)).

It localises to the mitochondrion inner membrane. It carries out the reaction 4 Fe(II)-[cytochrome c] + O2 + 8 H(+)(in) = 4 Fe(III)-[cytochrome c] + 2 H2O + 4 H(+)(out). Functionally, component of the cytochrome c oxidase, the last enzyme in the mitochondrial electron transport chain which drives oxidative phosphorylation. The respiratory chain contains 3 multisubunit complexes succinate dehydrogenase (complex II, CII), ubiquinol-cytochrome c oxidoreductase (cytochrome b-c1 complex, complex III, CIII) and cytochrome c oxidase (complex IV, CIV), that cooperate to transfer electrons derived from NADH and succinate to molecular oxygen, creating an electrochemical gradient over the inner membrane that drives transmembrane transport and the ATP synthase. Cytochrome c oxidase is the component of the respiratory chain that catalyzes the reduction of oxygen to water. Electrons originating from reduced cytochrome c in the intermembrane space (IMS) are transferred via the dinuclear copper A center (CU(A)) of subunit 2 and heme A of subunit 1 to the active site in subunit 1, a binuclear center (BNC) formed by heme A3 and copper B (CU(B)). The BNC reduces molecular oxygen to 2 water molecules using 4 electrons from cytochrome c in the IMS and 4 protons from the mitochondrial matrix. This Polypterus ornatipinnis (Ornate bichir) protein is Cytochrome c oxidase subunit 3 (mt-co3).